Here is a 431-residue protein sequence, read N- to C-terminus: Putative serine/threonine-protein kinase A (431 aa).

The Protein kinase domain occupies 20-279 (YLNKGIVGLG…VREIFQIPYI (260 aa)). Residues 26–34 (VGLGSYGEA) and lysine 49 contribute to the ATP site. The Proton acceptor role is filled by aspartate 147. Residues 331 to 429 (DVTHRGHVNK…WVHAIQRGIG (99 aa)) enclose the PH domain.

This sequence belongs to the protein kinase superfamily. Ser/Thr protein kinase family.

The enzyme catalyses L-seryl-[protein] + ATP = O-phospho-L-seryl-[protein] + ADP + H(+). It catalyses the reaction L-threonyl-[protein] + ATP = O-phospho-L-threonyl-[protein] + ADP + H(+). The sequence is that of Putative serine/threonine-protein kinase A (NRKA) from Trypanosoma brucei brucei.